A 775-amino-acid polypeptide reads, in one-letter code: Subtilisin-like protease SBT4.1 (775 aa).

The first 23 residues, 1-23 (MAIAFHTFLLQLLLFFFASFAEA), serve as a signal peptide directing secretion. A glycan (N-linked (GlcNAc...) asparagine) is linked at asparagine 24. A propeptide spans 24–106 (NDSRKTYLVQ…VSRSRNLKLQ (83 aa)) (activation peptide). The region spanning 29–105 (TYLVQMKVGG…EVSRSRNLKL (77 aa)) is the Inhibitor I9 domain. The Peptidase S8 domain occupies 110–606 (SWDFMNLTLK…SGHLNATKVR (497 aa)). Residues asparagine 115 and asparagine 126 are each glycosylated (N-linked (GlcNAc...) asparagine). The active-site Charge relay system is the aspartate 136. Asparagine 162 is a glycosylation site (N-linked (GlcNAc...) asparagine). Histidine 196 (charge relay system) is an active-site residue. One can recognise a PA domain in the interval 365–459 (FYPLLNEKAP…FLDEQKKGKL (95 aa)). Asparagine 437 carries N-linked (GlcNAc...) asparagine glycosylation. Serine 551 (charge relay system) is an active-site residue. N-linked (GlcNAc...) asparagine glycosylation occurs at asparagine 601.

It belongs to the peptidase S8 family. Post-translationally, the C-terminal propeptide is autocleaved.

It localises to the secreted. This Arabidopsis thaliana (Mouse-ear cress) protein is Subtilisin-like protease SBT4.1.